Reading from the N-terminus, the 52-residue chain is Large ribosomal subunit protein bL32c (52 aa).

Belongs to the bacterial ribosomal protein bL32 family.

It localises to the plastid. It is found in the chloroplast. The chain is Large ribosomal subunit protein bL32c from Morus indica (Mulberry).